The following is a 434-amino-acid chain: MTDFSPREIVSELDRYIVGQADAKRAVSIALRNRWRRLQLDAGLREEVLPKNILMIGPTGVGKTEIARRLAKLAGAPFLKVEATKFTEVGYVGRDVEQIIRDLVEVAIVQVRERKRKDVAARAQLAAEERVLDALVGANSSAATRDSFRRKLRAGELNDKEIEIETQSSGGGFPMFEIPGMPGAQMGAISIGDIFGKLGGRTKTRRVTVESSHDILIAEESDKLLDNDQLVQEAISVVENNGIVFLDEIDKICVRENRHGGDVSREGVQRDLLPLIEGTTVSTKHGAVKTDHILFIASGAFHIAKPSDLLPELQGRLPIRVELQALTRDDMRRILTEPEASLIKQYVALMKTEGVTLDITDDAIDALADIAVAVNSTVENIGARRLQTVMERVLDEISFTASDRSGETMRVDAAYVQQHIGDLAKNADLSRFIL.

ATP contacts are provided by residues Val18, 60–65 (GVGKTE), Asp247, Glu312, and Arg384.

The protein belongs to the ClpX chaperone family. HslU subfamily. A double ring-shaped homohexamer of HslV is capped on each side by a ring-shaped HslU homohexamer. The assembly of the HslU/HslV complex is dependent on binding of ATP.

The protein resides in the cytoplasm. ATPase subunit of a proteasome-like degradation complex; this subunit has chaperone activity. The binding of ATP and its subsequent hydrolysis by HslU are essential for unfolding of protein substrates subsequently hydrolyzed by HslV. HslU recognizes the N-terminal part of its protein substrates and unfolds these before they are guided to HslV for hydrolysis. This chain is ATP-dependent protease ATPase subunit HslU, found in Bradyrhizobium sp. (strain BTAi1 / ATCC BAA-1182).